We begin with the raw amino-acid sequence, 319 residues long: Putative G-protein coupled receptor B0244.7 (319 aa).

The N-linked (GlcNAc...) asparagine glycan is linked to Asn28. 6 helical membrane passes run 49–69, 107–127, 131–151, 166–186, 206–226, and 261–281; these read AIFI…IYIF, LPVI…FIIF, SFLS…IAVV, VLLI…CGIV, GPVL…CLVI, and LFAG…SAII.

Belongs to the G-protein coupled receptor 1 family. B0244 subfamily.

It localises to the cell membrane. The protein is Putative G-protein coupled receptor B0244.7 of Caenorhabditis elegans.